Here is a 1523-residue protein sequence, read N- to C-terminus: Slit homolog 3 protein (1523 aa).

A signal peptide spans 1 to 33; sequence MAPGRTGAGAAVRARLALALALASILSGPPAAA. One can recognise an LRRNT domain in the interval 34-61; it reads CPTKCTCSAASVDCHGLGLRAVPRGIPR. LRR repeat units lie at residues 62-83, 86-107, 110-131, 134-155, 158-179, and 182-203; these read NAER…DFTG, NLRV…AFQD, QLER…LFQS, KLTR…AFRG, GVKN…AFRA, and DLEI…SFNH. Residue asparagine 72 is glycosylated (N-linked (GlcNAc...) asparagine). Asparagine 192 is a glycosylation site (N-linked (GlcNAc...) asparagine). Residues 215-265 form the LRRCT 1 domain; it reads NHLYCDCHLAWLSDWLRQRRTIGQFTLCMAPVHLRGFSVADVQKKEYVCPG. Residues 271-307 enclose the LRRNT 2 domain; sequence PACNANSLSCPSACSCSNNIVDCRGKGLTEIPANLPE. Cysteine 284 and cysteine 293 are disulfide-bonded. LRR repeat units lie at residues 308–329, 332–353, 356–377, 380–401, and 404–425; these read GIVE…AFIQ, KLKR…AFQG, SLTS…LFDG, SLQL…TFQD, and NLNL…LFAP. Positions 437-487 constitute an LRRCT 2 domain; sequence NPFVCDCHLKWLADYLQDNPIETSGARCSSPRRLANKRISQIKSKKFRCSG. Cystine bridges form between cysteine 441–cysteine 464, cysteine 443–cysteine 485, cysteine 505–cysteine 511, and cysteine 509–cysteine 518. The LRRNT 3 domain occupies 496 to 532; the sequence is SSECFMDLVCPEKCRCEGTIVDCSNQKLSRIPSHLPE. 5 LRR repeats span residues 533-554, 558-579, 582-603, 606-627, and 630-651; these read YTTD…GIFK, NLRK…AFDG, GVQE…MFRG, GLKT…TFAG, and SVRL…AFTT. The N-linked (GlcNAc...) asparagine glycan is linked to asparagine 563. An N-linked (GlcNAc...) asparagine glycan is attached at asparagine 622. Positions 663 to 713 constitute an LRRCT 3 domain; sequence NPFNCNCHMAWLGRWLRKRRIVSGNPRCQKPFFLKEIPIQDVAIQDFTCEG. Cystine bridges form between cysteine 667–cysteine 690 and cysteine 669–cysteine 711. Residues 716–752 form the LRRNT 4 domain; it reads ENSCQLSPRCPEQCTCVETVVRCSNRGLHTLPKGMPK. LRR repeat units lie at residues 753 to 774, 776 to 797, 800 to 821, and 824 to 845; these read DVTE…LSTF, QLTL…TFSN, HLST…AFNG, and SLRV…SFND. 3 N-linked (GlcNAc...) asparagine glycosylation sites follow: asparagine 784, asparagine 792, and asparagine 797. An LRRCT 4 domain is found at 857-907; sequence NPLHCDCSLRWLSEWIKAGYKEPGIARCSSPESMADRLLLTTPTHRFQCKG. 6 consecutive EGF-like domains span residues 918 to 953, 955 to 994, 996 to 1032, 1034 to 1072, 1074 to 1110, and 1119 to 1155; these read NACL…KDCT, PINT…QRCE, NPDD…ELCD, VIDY…KLCE, DNDD…LFCE, and QTSP…PRCE. 18 cysteine pairs are disulfide-bonded: cysteine 920–cysteine 931, cysteine 925–cysteine 941, cysteine 943–cysteine 952, cysteine 959–cysteine 970, cysteine 964–cysteine 982, cysteine 984–cysteine 993, cysteine 1000–cysteine 1011, cysteine 1005–cysteine 1020, cysteine 1022–cysteine 1031, cysteine 1038–cysteine 1051, cysteine 1045–cysteine 1060, cysteine 1062–cysteine 1071, cysteine 1078–cysteine 1089, cysteine 1083–cysteine 1098, cysteine 1100–cysteine 1109, cysteine 1123–cysteine 1134, cysteine 1128–cysteine 1143, and cysteine 1145–cysteine 1154. The N-linked (GlcNAc...) asparagine glycan is linked to asparagine 928. Asparagine 1025 carries N-linked (GlcNAc...) asparagine glycosylation. The 175-residue stretch at 1158-1332 folds into the Laminin G-like domain; that stretch reads ITVNFVGKDS…PQSLGVSPGC (175 aa). N-linked (GlcNAc...) asparagine glycosylation is found at asparagine 1181 and asparagine 1247. 5 disulfide bridges follow: cysteine 1305/cysteine 1332, cysteine 1355/cysteine 1364, cysteine 1372/cysteine 1382, cysteine 1377/cysteine 1391, and cysteine 1393/cysteine 1402. 2 consecutive EGF-like domains span residues 1340–1365 and 1368–1403; these read HGLC…PLCD and AQDP…PLCD. N-linked (GlcNAc...) asparagine glycosylation occurs at asparagine 1406. One can recognise an EGF-like 9 domain in the interval 1408 to 1444; sequence SANACSAFKCHHGQCHISDRGEPYCLCQPGFSGNHCE. 7 disulfides stabilise this stretch: cysteine 1412-cysteine 1422, cysteine 1417-cysteine 1432, cysteine 1434-cysteine 1443, cysteine 1449-cysteine 1487, cysteine 1467-cysteine 1501, cysteine 1478-cysteine 1517, and cysteine 1482-cysteine 1519. In terms of domain architecture, CTCK spans 1449–1523; the sequence is CLGEIVREAI…HLECGCRECS (75 aa).

The protein resides in the secreted. In terms of biological role, may act as molecular guidance cue in cellular migration, and function may be mediated by interaction with roundabout homolog receptors. The protein is Slit homolog 3 protein (Slit3) of Rattus norvegicus (Rat).